The primary structure comprises 1340 residues: Lysine-specific demethylase ELF6 (1340 aa).

Residues 16 to 57 enclose the JmjN domain; it reads APVFRPTDTEFADPIAYISKIEKEASAFGICKIIPPLPKPSK. The segment at 195–245 is disordered; sequence QRKRRGRGFYQRKTENNDPSGKNGEKSSPEVEKAPLASTSLSSQDSSKQKN. Residues 217-227 are compositionally biased toward basic and acidic residues; the sequence is NGEKSSPEVEK. Positions 262 to 428 constitute a JmjC domain; it reads NSSWNLQMIA…VAKEAAVRRA (167 aa). The Fe cation site is built by His-305, Glu-307, and His-396. The Nuclear localization signal 1 signature appears at 818 to 825; that stretch reads GKKEEKII. The interval 1092 to 1225 is disordered; sequence GEPLESSDIL…SRQQEVPTTT (134 aa). Positions 1099–1115 are enriched in polar residues; the sequence is DILSSSNGDEASSNGLQ. Positions 1124 to 1133 are enriched in low complexity; the sequence is ESEVSSSENT. Residues 1188–1201 are compositionally biased toward basic and acidic residues; the sequence is SLKHTETSDEEKKP. Residues 1215–1225 show a composition bias toward polar residues; sequence GSRQQEVPTTT. 4 consecutive C2H2-type zinc fingers follow at residues 1228–1250, 1251–1275, 1281–1305, and 1311–1337; these read NRCY…THKR, NRCT…QRVH, FECS…LRLH, and YICK…KTMH. Zn(2+) is bound by residues Cys-1230, Cys-1235, His-1248, Cys-1253, Cys-1258, His-1265, His-1271, His-1275, Cys-1283, Cys-1288, His-1301, His-1305, Cys-1313, Cys-1318, His-1331, and His-1337. A Nuclear localization signal 2 motif is present at residues 1248–1255; sequence HKRNRCTH. Residues 1260 to 1333 are DNA-binding; it reads KKFRAHKYLV…FVSDYSRHRR (74 aa).

The protein belongs to the JHDM3 histone demethylase family. As to quaternary structure, interacts with BZR2 (via N-terminus). Expressed at low levels in seedlings, cotyledons and leaves. Detected in inflorescences, stems, roots and siliques but not in shoot apical meristems or root tips. Accumulates in flowers and embryos.

The protein localises to the nucleus. It carries out the reaction N(6),N(6),N(6)-trimethyl-L-lysyl(27)-[histone H3] + 2-oxoglutarate + O2 = N(6),N(6)-dimethyl-L-lysyl(27)-[histone H3] + formaldehyde + succinate + CO2. It catalyses the reaction N(6),N(6)-dimethyl-L-lysyl(27)-[histone H3] + 2-oxoglutarate + O2 = N(6)-methyl-L-lysyl(27)-[histone H3] + formaldehyde + succinate + CO2. In terms of biological role, histone demethylase that demethylates 'Lys-27' (H3K27me) of histone H3, thus acting as a positive regulator of gene expression. Demethylates tri-methylated (H3K27me3) and di-methylated (H3K27me2) H3K27me. Inactive on H3K27me1, H3K4me3, H3K9me2 and H3K36me3. Acts as a repressor of the photoperiodic flowering pathway and of FT. May also be active on H3K4me. Binds around the transcription start site of the FT locus. Required for epigenetic reprogramming by resetting the expression of the floral repressor FLC locus, thus aluviating cold-mediated FLC epigenetically silencing occurring during vernalization and preventing inapropriate epigenetic states inheritence. Its function is as follows. Together with REF6, required for H3K27me3 resetting (especially in constitutive heterochromatin within the pericentromeric regions) and transgenerational inheritance of histone marks, thus acting in safeguarding genome and epigenome integrity during sexual reproduction. The sequence is that of Lysine-specific demethylase ELF6 from Arabidopsis thaliana (Mouse-ear cress).